The sequence spans 136 residues: Lymphocyte antigen 6E (136 aa).

An N-terminal signal peptide occupies residues Met1 to Ser26. In terms of domain architecture, UPAR/Ly6 spans Leu27–Pro118. Cystine bridges form between Cys29-Cys54, Cys32-Cys41, Cys47-Cys76, Cys80-Cys98, and Cys99-Cys104. Asn105 carries an N-linked (GlcNAc...) asparagine glycan. Ala108 carries GPI-anchor amidated alanine lipidation. The propeptide at Ala109–Pro136 is removed in mature form.

In terms of assembly, interacts with CHRNA4. Interacts with CD3Z/CD247. Ubiquitously expressed in mouse adult tissues with maximal expression in the lung and the salivary gland. Expression is strikingly lower in the fetal tissues except for the placenta. Present in thymus where its expression is observed in immature thymocytes and thymic stromal cells. Also found on functionally active T-cells as well as B-cells and thymic dendritic cells.

It localises to the cell membrane. In terms of biological role, GPI-anchored cell surface protein that regulates T-lymphocytes proliferation, differentiation, and activation. Regulates the T-cell receptor (TCR) signaling by interacting with component CD3Z/CD247 at the plasma membrane, leading to CD3Z/CD247 phosphorylation modulation. Restricts the entry of murine coronavirus, mouse hepatitis virus, by interfering with spike protein-mediated membrane fusion. Also plays an essential role in placenta formation by acting as the main receptor for syncytin-A (SynA). Therefore, participates in the normal fusion of syncytiotrophoblast layer I (SynT-I) and in the proper morphogenesis of both fetal and maternal vasculatures within the placenta. May also act as a modulator of nicotinic acetylcholine receptors (nAChRs) activity. In vitro inhibits alpha-3:beta-4-containing nAChRs maximum response. This is Lymphocyte antigen 6E from Mus musculus (Mouse).